The chain runs to 128 residues: Transcription antitermination protein NusB (128 aa).

Belongs to the NusB family.

Functionally, involved in transcription antitermination. Required for transcription of ribosomal RNA (rRNA) genes. Binds specifically to the boxA antiterminator sequence of the ribosomal RNA (rrn) operons. The chain is Transcription antitermination protein NusB from Exiguobacterium sp. (strain ATCC BAA-1283 / AT1b).